Here is a 599-residue protein sequence, read N- to C-terminus: UvrABC system protein C (599 aa).

The GIY-YIG domain occupies 15–93 (DNPGVYQYYD…IKTLQPRYNI (79 aa)). One can recognise a UVR domain in the interval 207–242 (KDSMKDFKKVMTNLAQNMHFEEAQKIKEKIEILENY).

It belongs to the UvrC family. As to quaternary structure, interacts with UvrB in an incision complex.

Its subcellular location is the cytoplasm. Functionally, the UvrABC repair system catalyzes the recognition and processing of DNA lesions. UvrC both incises the 5' and 3' sides of the lesion. The N-terminal half is responsible for the 3' incision and the C-terminal half is responsible for the 5' incision. The chain is UvrABC system protein C from Flavobacterium psychrophilum (strain ATCC 49511 / DSM 21280 / CIP 103535 / JIP02/86).